Here is a 330-residue protein sequence, read N- to C-terminus: Free fatty acid receptor 2 (330 aa).

Residues 1–8 (MTPDWHSS) are Extracellular-facing. Residues 9 to 29 (LILTAYILIFLTGLPANLLAL) traverse the membrane as a helical segment. Topologically, residues 30 to 43 (RAFMGRVRQPQPAP) are cytoplasmic. The helical transmembrane segment at 44 to 64 (VHILLLNLTLADLLLLLLLPF) threads the bilayer. Residues 65-79 (RIVEAASNFRWYLPK) are Extracellular-facing. Residues 80 to 100 (IVCALTGFGFYSSIYCSTWLL) traverse the membrane as a helical segment. Over 101-126 (AGISMERYLGVAFPVQYKLSRRPLYG) the chain is Cytoplasmic. Residues 127 to 147 (VIAALVAWIMSFGHCTIVIIV) traverse the membrane as a helical segment. Topologically, residues 148-184 (QYLNSTEQVGTENQITCYENFTQEQLDVVLPVRLELC) are extracellular. Asn-151 and Asn-167 each carry an N-linked (GlcNAc...) asparagine glycan. A helical membrane pass occupies residues 185 to 205 (LVLFFVPMAVTIFCYWRFVWI). Residues 206–219 (MLTQPHVGAQRRRR) lie on the Cytoplasmic side of the membrane. The helical transmembrane segment at 220–240 (AVGLAVVTLLNFLVCFGPYNM) threads the bilayer. Residues 241–255 (SHLVGFYLRQSPSWR) are Extracellular-facing. Residues 256-276 (VEAVVFSSLNASLDPLLFYFS) traverse the membrane as a helical segment. Over 277–330 (SSVVRRAFGKGLLLIRNPASSMLGRGAKETVEGTKMDRGGSQAEGVQSSEFVTE) the chain is Cytoplasmic. Residues 306 to 330 (TVEGTKMDRGGSQAEGVQSSEFVTE) are disordered. The segment covering 320 to 330 (EGVQSSEFVTE) has biased composition (polar residues).

Belongs to the G-protein coupled receptor 1 family. In terms of assembly, interacts with FCN1 (via Fibrinogen C-terminal domain). In terms of tissue distribution, highly expressed in hematopoietic tissues, such as spleen and bone marrow, with highest levels in a subset of immune cells, including monocytes or neutrophils. Expressed in adipose tissues with high expression in differentiating adipocytes. Expressed by intestinal endocrine cells.

It is found in the cell membrane. Its function is as follows. G protein-coupled receptor that is activated by a major product of dietary fiber digestion, the short chain fatty acids (SCFAs), and that plays a role in the regulation of whole-body energy homeostasis and in intestinal immunity. In omnivorous mammals, the short chain fatty acids acetate, propionate and butyrate are produced primarily by the gut microbiome that metabolizes dietary fibers. SCFAs serve as a source of energy but also act as signaling molecules. That G protein-coupled receptor is probably coupled to the pertussis toxin-sensitive, G(i/o)-alpha family of G proteins but also to the Gq family. Its activation results in the formation of inositol 1,4,5-trisphosphate, the mobilization of intracellular calcium, the phosphorylation of the MAPK3/ERK1 and MAPK1/ERK2 kinases and the inhibition of intracellular cAMP accumulation. May play a role in glucose homeostasis by regulating the secretion of GLP-1, in response to short-chain fatty acids accumulating in the intestine. May also regulate the production of LEP/Leptin, a hormone acting on the central nervous system to inhibit food intake. Finally, may also regulate whole-body energy homeostasis through adipogenesis regulating both differentiation and lipid storage of adipocytes. In parallel to its role in energy homeostasis, may also mediate the activation of the inflammatory and immune responses by SCFA in the intestine, regulating the rapid production of chemokines and cytokines. May also play a role in the resolution of the inflammatory response and control chemotaxis in neutrophils. In addition to SCFAs, may also be activated by the extracellular lectin FCN1 in a process leading to activation of monocytes and inducing the secretion of interleukin-8/IL-8 in response to the presence of microbes. This is Free fatty acid receptor 2 (Ffar2) from Mus musculus (Mouse).